The primary structure comprises 831 residues: Multiphosphoryl transfer protein (831 aa).

The HPr domain occupies 1–90 (MLTIQFLCPL…EYIQVRFIDS (90 aa)). The active-site Pros-phosphohistidine intermediate; for HPr activity is histidine 15. At histidine 15 the chain carries Phosphohistidine; by EI. Positions 119 to 650 (GNVLASGVGV…AVKSQLRQLD (532 aa)) are PTS EI. Histidine 298 (tele-phosphohistidine intermediate; for PTS EI activity) is an active-site residue. At histidine 298 the chain carries Phosphohistidine; by autocatalysis. 2 residues coordinate phosphoenolpyruvate: arginine 405 and arginine 441. Residues glutamate 540 and aspartate 564 each coordinate Mg(2+). Phosphoenolpyruvate-binding positions include 563 to 564 (ND) and arginine 574. Cysteine 611 serves as the catalytic Proton donor; for EI activity. In terms of domain architecture, PTS EIIA type-2 spans 685 to 828 (PLLALENIFV…QSILTLLETE (144 aa)). Histidine 747 serves as the catalytic Tele-phosphohistidine intermediate; for PTS EIIA activity. Residue histidine 747 is modified to Phosphohistidine; by HPr.

This sequence belongs to the PEP-utilizing enzyme family. It depends on Mg(2+) as a cofactor.

The protein resides in the cytoplasm. It carries out the reaction L-histidyl-[protein] + phosphoenolpyruvate = N(pros)-phospho-L-histidyl-[protein] + pyruvate. The catalysed reaction is D-fructose(out) + N(pros)-phospho-L-histidyl-[protein] = D-fructose 1-phosphate(in) + L-histidyl-[protein]. Its function is as follows. Multifunctional protein that includes general (non sugar-specific) and sugar-specific components of the phosphoenolpyruvate-dependent sugar phosphotransferase system (sugar PTS). This major carbohydrate active transport system catalyzes the phosphorylation of incoming sugar substrates concomitantly with their translocation across the cell membrane. The enzyme II FryABC PTS system is involved in fructose transport. This Escherichia coli O6:H1 (strain CFT073 / ATCC 700928 / UPEC) protein is Multiphosphoryl transfer protein (fryA).